We begin with the raw amino-acid sequence, 132 residues long: UPF0201 protein MTH_433 (132 aa).

The protein belongs to the UPF0201 family.

This Methanothermobacter thermautotrophicus (strain ATCC 29096 / DSM 1053 / JCM 10044 / NBRC 100330 / Delta H) (Methanobacterium thermoautotrophicum) protein is UPF0201 protein MTH_433.